Consider the following 184-residue polypeptide: NADH-quinone oxidoreductase subunit B (184 aa).

Residues Cys-37, Cys-38, Cys-103, and Cys-132 each contribute to the [4Fe-4S] cluster site.

It belongs to the complex I 20 kDa subunit family. As to quaternary structure, NDH-1 is composed of 14 different subunits. Subunits NuoB, C, D, E, F, and G constitute the peripheral sector of the complex. [4Fe-4S] cluster is required as a cofactor.

The protein resides in the cell membrane. It carries out the reaction a quinone + NADH + 5 H(+)(in) = a quinol + NAD(+) + 4 H(+)(out). NDH-1 shuttles electrons from NADH, via FMN and iron-sulfur (Fe-S) centers, to quinones in the respiratory chain. The immediate electron acceptor for the enzyme in this species is believed to be a menaquinone. Couples the redox reaction to proton translocation (for every two electrons transferred, four hydrogen ions are translocated across the cytoplasmic membrane), and thus conserves the redox energy in a proton gradient. This chain is NADH-quinone oxidoreductase subunit B, found in Mycobacterium bovis (strain BCG / Pasteur 1173P2).